The sequence spans 192 residues: Rho-related protein racC (192 aa).

13–20 contacts GTP; the sequence is GDGAVGKT. Residues 35–43 carry the Effector region motif; the sequence is YIPTVFDNY. Residues 60 to 64 and 118 to 121 each bind GTP; these read DTAGQ and TKLD. At Cys-189 the chain carries Cysteine methyl ester. Cys-189 carries the S-geranylgeranyl cysteine lipid modification. Positions 190–192 are cleaved as a propeptide — removed in mature form; the sequence is IVM.

It belongs to the small GTPase superfamily. Rho family. As to quaternary structure, interacts with pakB.

Its subcellular location is the cell membrane. The chain is Rho-related protein racC (racC) from Dictyostelium discoideum (Social amoeba).